Here is an 83-residue protein sequence, read N- to C-terminus: Small ribosomal subunit protein uS17 (83 aa).

The protein belongs to the universal ribosomal protein uS17 family. As to quaternary structure, part of the 30S ribosomal subunit.

Its function is as follows. One of the primary rRNA binding proteins, it binds specifically to the 5'-end of 16S ribosomal RNA. The protein is Small ribosomal subunit protein uS17 of Campylobacter concisus (strain 13826).